A 642-amino-acid chain; its full sequence is MPCGEDWLSHPLGIVQGFFAQNGVNPDWEKKVIEYFKEKLKENNAPKWVPSLNEVPLHYLKPNSFVKFRCMIQDMFDPEFYMGIYETVNQNTKARVLHFGKYRDVAECGPQQELDLSSPRSTTSERQTFYCVPVPGESSWVKEAYVNANQARVSPSTSYTPSRHKRSYEDDEDMDLQPSKQKEQHPGSRQAGGLGGLHWCGEPKRLETEASSGQQLNTLNLSSPFDLNFPLPGEKGPACLVKVYEDWDCFKVNDVLELYGVLSVDPVLSVLNSEERDASALLDPMECTDMAEEQRVHSPPASLVPRIHVILAQKLQHINPLLPTCLNKEESRSCQFVSNFMSELSPVRAELLGFLTHALLGDSLAAEYLILHLISTVYTRRDVLPLGKFTVNLSGCPQNSTFTEHLYRIIQHLVPASFRLQMTIENMNQLKLIPHKDYTANRLVSGLLQLPNNTSLVIDETLLEQGQLDTPGVHNVTALSNLITWQKVDYDFSYHQMEFPCNINVLITSEGRSLLPADCQIHLQPQLIPPNMEEYMNGLLSAVLPSVLNKFRIYLTLLRFLDYNLSDDITKAVEDDFVEMRKDDPQSITADDLHQLLVVARFLSLSVGQTTLSRERWLRAKQLELSRKARLQQQKSVNGNEL.

Residues alanine 151–proline 161 are compositionally biased toward polar residues. The interval alanine 151–glycine 196 is disordered. A Phosphoserine modification is found at serine 154. Position 160 is a phosphothreonine (threonine 160). Residues serine 167 and serine 298 each carry the phosphoserine modification.

Belongs to the MCMBP family. In terms of assembly, interacts with the MCM complex: associates with the MCM3-7 complex which lacks MCM2, while it does not interact with the MCM complex when MCM2 is present (MCM2-7 complex). Interacts with the RPA complex, when composed of all RPA1, RPA2 and RPA3 components, but not with RPA1 or RPA2 alone.

It is found in the nucleus. In terms of biological role, associated component of the MCM complex that acts as a regulator of DNA replication. Binds to the MCM complex during late S phase and promotes the disassembly of the MCM complex from chromatin, thereby acting as a key regulator of pre-replication complex (pre-RC) unloading from replicated DNA. Can dissociate the MCM complex without addition of ATP; probably acts by destabilizing interactions of each individual subunits of the MCM complex. Required for sister chromatid cohesion. The chain is Mini-chromosome maintenance complex-binding protein (Mcmbp) from Mus musculus (Mouse).